The chain runs to 407 residues: Phosphoglycerate kinase (407 aa).

Residues 27–29 (DLN), arginine 43, 66–69 (HLGR), arginine 125, and arginine 165 each bind substrate. ATP is bound by residues lysine 215, glycine 303, glutamate 334, and 363-366 (GGDS).

The protein belongs to the phosphoglycerate kinase family. In terms of assembly, monomer.

The protein localises to the cytoplasm. The catalysed reaction is (2R)-3-phosphoglycerate + ATP = (2R)-3-phospho-glyceroyl phosphate + ADP. The protein operates within carbohydrate degradation; glycolysis; pyruvate from D-glyceraldehyde 3-phosphate: step 2/5. The chain is Phosphoglycerate kinase from Mycobacterium sp. (strain JLS).